Consider the following 369-residue polypeptide: D-alanine--D-alanine ligase (369 aa).

The region spanning 152–359 (KKLFAAEGLP…YPSLLATMVE (208 aa)) is the ATP-grasp domain. Residue 180–235 (RERLGLPVFVKPARGGSSIGVSRVSSWDELDAAVAAARDHDPKVIVEAAIAGRELE) coordinates ATP. Positions 314, 326, and 328 each coordinate Mg(2+).

Belongs to the D-alanine--D-alanine ligase family. The cofactor is Mg(2+). Requires Mn(2+) as cofactor.

Its subcellular location is the cytoplasm. The catalysed reaction is 2 D-alanine + ATP = D-alanyl-D-alanine + ADP + phosphate + H(+). Its pathway is cell wall biogenesis; peptidoglycan biosynthesis. Functionally, cell wall formation. This is D-alanine--D-alanine ligase from Mycolicibacterium paratuberculosis (strain ATCC BAA-968 / K-10) (Mycobacterium paratuberculosis).